The chain runs to 131 residues: L-ectoine synthase (131 aa).

It belongs to the ectoine synthase family.

The catalysed reaction is (2S)-4-acetamido-2-aminobutanoate = L-ectoine + H2O. It functions in the pathway amine and polyamine biosynthesis; ectoine biosynthesis; L-ectoine from L-aspartate 4-semialdehyde: step 3/3. Functionally, catalyzes the circularization of gamma-N-acetyl-alpha,gamma-diaminobutyric acid (ADABA) to ectoine (1,4,5,6-tetrahydro-2-methyl-4-pyrimidine carboxylic acid), which is an excellent osmoprotectant. The sequence is that of L-ectoine synthase from Nocardia farcinica (strain IFM 10152).